The chain runs to 154 residues: UPF0178 protein Glov_0658 (154 aa).

It belongs to the UPF0178 family.

This chain is UPF0178 protein Glov_0658, found in Trichlorobacter lovleyi (strain ATCC BAA-1151 / DSM 17278 / SZ) (Geobacter lovleyi).